Here is a 460-residue protein sequence, read N- to C-terminus: Hydroxyproline dehydrogenase (460 aa).

Residue K310 is modified to N6-acetyllysine.

Belongs to the proline oxidase family. The cofactor is FAD.

It catalyses the reaction trans-4-hydroxy-L-proline + a quinone = (3R,5S)-1-pyrroline-3-hydroxy-5-carboxylate + a quinol + H(+). The enzyme catalyses L-proline + a quinone = (S)-1-pyrroline-5-carboxylate + a quinol + H(+). Hydroproxyproline dehydrogenase activity is inhibited by THFA,(1R,3R)3-OH-cyclopentane-COOH and 5-OH-1H-pyrazole-3-COOH. Its function is as follows. Dehydrogenase that converts trans-4-L-hydroxyproline to delta-1-pyrroline-3-hydroxy-5-carboxylate (Hyp) using ubiquinone-10 as the terminal electron acceptor. Can also use proline as a substrate but with a very much lower efficiency. Does not react with other diastereomers of Hyp: trans-4-D-hydroxyproline and cis-4-L-hydroxyproline. Ubiquininone analogs such as menadione, duroquinone and ubiquinone-1 react more efficiently than oxygen as the terminal electron acceptor during catalysis. The protein is Hydroxyproline dehydrogenase of Homo sapiens (Human).